Reading from the N-terminus, the 305-residue chain is Ribonuclease BN (305 aa).

Positions 64, 66, 68, 69, 141, 212, and 270 each coordinate Zn(2+). Asp68 serves as the catalytic Proton acceptor.

It belongs to the RNase Z family. RNase BN subfamily. Homodimer. Requires Zn(2+) as cofactor.

In terms of biological role, zinc phosphodiesterase, which has both exoribonuclease and endoribonuclease activities. The sequence is that of Ribonuclease BN from Salmonella agona (strain SL483).